Here is a 320-residue protein sequence, read N- to C-terminus: tRNA dimethylallyltransferase (320 aa).

Residue Gly16–Thr23 participates in ATP binding. Thr18 to Thr23 lines the substrate pocket. Interaction with substrate tRNA stretches follow at residues Asp41 to Leu44, Gln165 to Arg169, and Arg247 to Arg252.

It belongs to the IPP transferase family. Monomer. Mg(2+) is required as a cofactor.

The catalysed reaction is adenosine(37) in tRNA + dimethylallyl diphosphate = N(6)-dimethylallyladenosine(37) in tRNA + diphosphate. In terms of biological role, catalyzes the transfer of a dimethylallyl group onto the adenine at position 37 in tRNAs that read codons beginning with uridine, leading to the formation of N6-(dimethylallyl)adenosine (i(6)A). The protein is tRNA dimethylallyltransferase of Azoarcus sp. (strain BH72).